The following is a 231-amino-acid chain: Ribonuclease HI (231 aa).

The 146-residue stretch at 1 to 146 folds into the RNase H type-1 domain; it reads MRERAVAACD…ADRAASQAAV (146 aa). Mg(2+) is bound by residues D10, E50, D72, and D138. Composition is skewed to low complexity over residues 148-157 and 166-181; these read QEAAGSALGS and VPAA…SGAA. Disordered stretches follow at residues 148 to 192 and 212 to 231; these read QEAA…SART and PIAK…VAAG.

Belongs to the RNase H family. As to quaternary structure, monomer. The cofactor is Mg(2+).

Its subcellular location is the cytoplasm. It carries out the reaction Endonucleolytic cleavage to 5'-phosphomonoester.. Endonuclease that specifically degrades the RNA of RNA-DNA hybrids. The protein is Ribonuclease HI (rnhA) of Streptomyces coelicolor (strain ATCC BAA-471 / A3(2) / M145).